The sequence spans 244 residues: Sugar fermentation stimulation protein homolog (244 aa).

It belongs to the SfsA family.

The sequence is that of Sugar fermentation stimulation protein homolog from Dinoroseobacter shibae (strain DSM 16493 / NCIMB 14021 / DFL 12).